Reading from the N-terminus, the 1053-residue chain is Mediator of RNA polymerase II transcription subunit 16 (1053 aa).

Residues 139–170 (KTEGNTEKNKDTKQIGNGSGTNGHGDSPINTP) form a disordered region. Residues 142 to 151 (GNTEKNKDTK) show a composition bias toward basic and acidic residues.

It belongs to the Mediator complex subunit 16 family. In terms of assembly, component of the Mediator complex.

The protein localises to the nucleus. Component of the Mediator complex, a coactivator involved in the regulated transcription of nearly all RNA polymerase II-dependent genes. Mediator functions as a bridge to convey information from gene-specific regulatory proteins to the basal RNA polymerase II transcription machinery. Mediator is recruited to promoters by direct interactions with regulatory proteins and serves as a scaffold for the assembly of a functional preinitiation complex with RNA polymerase II and the general transcription factors. The polypeptide is Mediator of RNA polymerase II transcription subunit 16 (SIN4) (Candida albicans (strain SC5314 / ATCC MYA-2876) (Yeast)).